The primary structure comprises 320 residues: GTP 3',8-cyclase (320 aa).

The 221-residue stretch at 5 to 225 (QFDRKINYLR…IQLIKKDEKA (221 aa)) folds into the Radical SAM core domain. Arg-14 is a GTP binding site. Residues Cys-21 and Cys-25 each contribute to the [4Fe-4S] cluster site. Tyr-27 is an S-adenosyl-L-methionine binding site. Residue Cys-28 coordinates [4Fe-4S] cluster. Arg-64 is a binding site for GTP. S-adenosyl-L-methionine is bound at residue Gly-68. Thr-95 lines the GTP pocket. Ser-119 contributes to the S-adenosyl-L-methionine binding site. GTP is bound at residue Lys-155. Met-189 is a binding site for S-adenosyl-L-methionine. Residues Cys-248 and Cys-251 each contribute to the [4Fe-4S] cluster site. A GTP-binding site is contributed by 253 to 255 (RIR). Cys-265 contributes to the [4Fe-4S] cluster binding site.

It belongs to the radical SAM superfamily. MoaA family. As to quaternary structure, monomer and homodimer. The cofactor is [4Fe-4S] cluster.

It catalyses the reaction GTP + AH2 + S-adenosyl-L-methionine = (8S)-3',8-cyclo-7,8-dihydroguanosine 5'-triphosphate + 5'-deoxyadenosine + L-methionine + A + H(+). Its pathway is cofactor biosynthesis; molybdopterin biosynthesis. Its function is as follows. Catalyzes the cyclization of GTP to (8S)-3',8-cyclo-7,8-dihydroguanosine 5'-triphosphate. This is GTP 3',8-cyclase from Campylobacter jejuni subsp. doylei (strain ATCC BAA-1458 / RM4099 / 269.97).